The primary structure comprises 276 residues: Energy-coupling factor transporter ATP-binding protein EcfA1 (276 aa).

An ABC transporter domain is found at 2–237 (IEIKNLKFKY…GSELVDLGLD (236 aa)). ATP is bound at residue 37–44 (GHNGSGKS).

The protein belongs to the ABC transporter superfamily. Energy-coupling factor EcfA family. Forms a stable energy-coupling factor (ECF) transporter complex composed of 2 membrane-embedded substrate-binding proteins (S component), 2 ATP-binding proteins (A component) and 2 transmembrane proteins (T component).

The protein localises to the cell membrane. In terms of biological role, ATP-binding (A) component of a common energy-coupling factor (ECF) ABC-transporter complex. Unlike classic ABC transporters this ECF transporter provides the energy necessary to transport a number of different substrates. The chain is Energy-coupling factor transporter ATP-binding protein EcfA1 from Streptococcus thermophilus (strain CNRZ 1066).